The chain runs to 117 residues: Large ribosomal subunit protein eL34 (117 aa).

This sequence belongs to the eukaryotic ribosomal protein eL34 family. Component of the large ribosomal subunit.

It is found in the cytoplasm. Its subcellular location is the cytosol. It localises to the endoplasmic reticulum. Functionally, component of the large ribosomal subunit. The ribosome is a large ribonucleoprotein complex responsible for the synthesis of proteins in the cell. In Danio rerio (Zebrafish), this protein is Large ribosomal subunit protein eL34 (rpl34).